Reading from the N-terminus, the 56-residue chain is Prokaryotic ubiquitin-like protein UBact (56 aa).

Residues 1–28 (MPQDQQRKKQFDPNPNRDDSQRKTPVDK) are compositionally biased toward basic and acidic residues. The tract at residues 1 to 33 (MPQDQQRKKQFDPNPNRDDSQRKTPVDKEIDDI) is disordered. Residue Q56 is modified to Deamidated glutamine. Q56 participates in a covalent cross-link: Isoglutamyl lysine isopeptide (Gln-Lys) (interchain with K-? in acceptor proteins).

The protein belongs to the ubiquitin-like protein UBact family. May be modified by deamidation of its C-terminal glutamine to glutamate by the adjacently encoded deamidase. This could be a prerequisite to the subsequent conjugation, as shown in the other prokaryotic ubiquitin-like protein Pup.

Its function is as follows. May function as a protein modifier covalently attached to lysine residues of substrate proteins. This may serve to target the modified proteins for degradation by proteasomes. This is Prokaryotic ubiquitin-like protein UBact from Yanofskybacteria sp. (strain GW2011_GWA1_39_13).